A 208-amino-acid polypeptide reads, in one-letter code: Small ribosomal subunit protein uS3 (208 aa).

Positions 38 to 106 (IRDYIKARLY…EILIDIQEVR (69 aa)) constitute a KH type-2 domain.

It belongs to the universal ribosomal protein uS3 family. In terms of assembly, part of the 30S ribosomal subunit. Forms a tight complex with proteins S10 and S14.

Functionally, binds the lower part of the 30S subunit head. Binds mRNA in the 70S ribosome, positioning it for translation. The protein is Small ribosomal subunit protein uS3 of Syntrophobacter fumaroxidans (strain DSM 10017 / MPOB).